Reading from the N-terminus, the 214-residue chain is External core antigen (214 aa).

The signal sequence occupies residues 1–19 (MQLFHLCLIISCTCPTLQA). Positions 25 to 27 (GWL) are HBEAG. The tract at residues 164 to 214 (PNAPILSTLPETTVVRRRDRGRSPRRRTPSPRRRRSQSPRRRRSQSRESQC) is disordered. Residues 178–207 (VRRRDRGRSPRRRTPSPRRRRSQSPRRRRS) show a composition bias toward basic residues. The stretch at 186–192 (SPRRRTP) is one 1; half-length repeat. A 3 X 8 AA repeats of S-P-R-R-R-R-S-Q region spans residues 186–208 (SPRRRTPSPRRRRSQSPRRRRSQ). A propeptide spanning residues 186–214 (SPRRRTPSPRRRRSQSPRRRRSQSRESQC) is cleaved from the precursor. 2 tandem repeats follow at residues 193-200 (SPRRRRSQ) and 201-208 (SPRRRRSQ).

Belongs to the orthohepadnavirus precore antigen family. In terms of assembly, homodimerizes. Phosphorylated. Post-translationally, cleaved by host furin.

It is found in the secreted. It localises to the host nucleus. May regulate immune response to the intracellular capsid in acting as a T-cell tolerogen, by having an immunoregulatory effect which prevents destruction of infected cells by cytotoxic T-cells. This immune regulation may predispose to chronicity during perinatal infections and prevent severe liver injury during adult infections. In Homo sapiens (Human), this protein is External core antigen.